The primary structure comprises 256 residues: Type III pantothenate kinase (256 aa).

6–13 (DVGNTNMV) is an ATP binding site. Substrate-binding positions include tyrosine 100 and 107–110 (GADR). Residue aspartate 109 is the Proton acceptor of the active site. Residue aspartate 129 participates in K(+) binding. Residue threonine 132 participates in ATP binding. Threonine 184 provides a ligand contact to substrate.

It belongs to the type III pantothenate kinase family. As to quaternary structure, homodimer. NH4(+) is required as a cofactor. K(+) serves as cofactor.

It is found in the cytoplasm. The enzyme catalyses (R)-pantothenate + ATP = (R)-4'-phosphopantothenate + ADP + H(+). The protein operates within cofactor biosynthesis; coenzyme A biosynthesis; CoA from (R)-pantothenate: step 1/5. Functionally, catalyzes the phosphorylation of pantothenate (Pan), the first step in CoA biosynthesis. The protein is Type III pantothenate kinase of Clostridioides difficile (strain 630) (Peptoclostridium difficile).